The primary structure comprises 417 residues: Cysteate synthase (417 aa).

An N6-(pyridoxal phosphate)lysine modification is found at Lys-104. The pyridoxal 5'-phosphate site is built by Asn-131 and Thr-371.

The protein belongs to the threonine synthase family. Cysteate synthase subfamily. As to quaternary structure, homotrimer. The cofactor is pyridoxal 5'-phosphate.

It carries out the reaction O-phospho-L-serine + sulfite + H(+) = L-cysteate + phosphate. Its pathway is cofactor biosynthesis; coenzyme M biosynthesis. Specifically catalyzes the beta-elimination of phosphate from L-phosphoserine and the beta-addition of sulfite to the dehydroalanine intermediate to produce L-cysteate. The polypeptide is Cysteate synthase (Methanococcoides burtonii (strain DSM 6242 / NBRC 107633 / OCM 468 / ACE-M)).